A 935-amino-acid polypeptide reads, in one-letter code: Ribonuclease E (935 aa).

The S1 motif domain maps to 39–119; the sequence is ANIYKGKITR…GNKGAALTTF (81 aa). 2 residues coordinate Mg(2+): D302 and D345. C403 and C406 together coordinate Zn(2+). Residues 403-406 form a required for zinc-mediated homotetramerization and catalytic activity region; that stretch reads CPRC. Disordered regions lie at residues 571 to 669 and 698 to 743; these read TKSE…DLRK and VQNN…KSPM. 2 stretches are compositionally biased toward basic and acidic residues: residues 593–625 and 701–719; these read RSQD…ERNQ and NDEK…ERQR. Basic residues predominate over residues 720–734; the sequence is RTPRHLRAANNQRRR.

This sequence belongs to the RNase E/G family. RNase E subfamily. In terms of assembly, component of the RNA degradosome, which is a multiprotein complex involved in RNA processing and mRNA degradation. Within the RNA degradosome, RNase E assembles into a homotetramer formed by a dimer of dimers. Requires Zn(2+) as cofactor. It depends on Mg(2+) as a cofactor.

The protein localises to the cytoplasm. It is found in the cell inner membrane. It catalyses the reaction Endonucleolytic cleavage of single-stranded RNA in A- and U-rich regions.. Endoribonuclease that plays a central role in RNA processing and decay. Required for the maturation of 5S and 16S rRNAs and the majority of tRNAs. Also involved in the degradation of most mRNAs. In Haemophilus influenzae (strain ATCC 51907 / DSM 11121 / KW20 / Rd), this protein is Ribonuclease E.